The following is a 359-amino-acid chain: UDP-2-acetamido-2-deoxy-3-oxo-D-glucuronate aminotransferase (359 aa).

Residues G29, Y31, and S184 each contribute to the UDP-2-acetamido-2-deoxy-alpha-D-ribo-hex-3-uluronate site. The residue at position 185 (K185) is an N6-(pyridoxal phosphate)lysine. 3 residues coordinate UDP-2-acetamido-2-deoxy-alpha-D-ribo-hex-3-uluronate: R229, H308, and Y309.

The protein belongs to the DegT/DnrJ/EryC1 family. As to quaternary structure, homodimer. It depends on pyridoxal 5'-phosphate as a cofactor.

The enzyme catalyses UDP-2-acetamido-2-deoxy-alpha-D-ribo-hex-3-uluronate + L-glutamate = UDP-2-acetamido-3-amino-2,3-dideoxy-alpha-D-glucuronate + 2-oxoglutarate. It functions in the pathway bacterial outer membrane biogenesis; LPS O-antigen biosynthesis. Its function is as follows. Plays a role in the biosynthesis of B-band O antigen for serotype O5. Catalyzes the amination of UDP-2-acetamido-2-deoxy-3-oxo-D-glucuronic acid (UDP-3-oxo-D-GlcNAcA) to UDP-2-acetamido-3-amino-2,3-dideoxy-D-glucuronic acid (UDP-GlcNAc3NA), using L-glutamate as the preferred amine donor. The protein is UDP-2-acetamido-2-deoxy-3-oxo-D-glucuronate aminotransferase of Pseudomonas aeruginosa (strain ATCC 15692 / DSM 22644 / CIP 104116 / JCM 14847 / LMG 12228 / 1C / PRS 101 / PAO1).